Here is a 123-residue protein sequence, read N- to C-terminus: MAKKRYRKVTEGIAHIKATFNNTMISVSDPQGNVLCFRSAGGSGFKGSRKGTPYGAQMASEEVGRLARDNFDMRRIAVRVKGPGAGRDSAIRGLRSAGLEVIYLEDRTPLPHNGCRPRKKRRV.

The protein belongs to the universal ribosomal protein uS11 family. Part of the 30S ribosomal subunit. Interacts with proteins S7 and S18. Binds to IF-3.

Located on the platform of the 30S subunit, it bridges several disparate RNA helices of the 16S rRNA. Forms part of the Shine-Dalgarno cleft in the 70S ribosome. In Coxiella burnetii (strain RSA 331 / Henzerling II), this protein is Small ribosomal subunit protein uS11.